The following is a 209-amino-acid chain: Thiamine-phosphate synthase (209 aa).

Residues 36–40 (QLRDK) and Asn-68 each bind 4-amino-2-methyl-5-(diphosphooxymethyl)pyrimidine. Mg(2+) is bound by residues Asp-69 and Asp-88. A 4-amino-2-methyl-5-(diphosphooxymethyl)pyrimidine-binding site is contributed by Ser-107. 133-135 (TNS) serves as a coordination point for 2-[(2R,5Z)-2-carboxy-4-methylthiazol-5(2H)-ylidene]ethyl phosphate. Residue Lys-136 participates in 4-amino-2-methyl-5-(diphosphooxymethyl)pyrimidine binding. 2-[(2R,5Z)-2-carboxy-4-methylthiazol-5(2H)-ylidene]ethyl phosphate is bound by residues Gly-164 and 184 to 185 (IT).

The protein belongs to the thiamine-phosphate synthase family. The cofactor is Mg(2+).

It catalyses the reaction 2-[(2R,5Z)-2-carboxy-4-methylthiazol-5(2H)-ylidene]ethyl phosphate + 4-amino-2-methyl-5-(diphosphooxymethyl)pyrimidine + 2 H(+) = thiamine phosphate + CO2 + diphosphate. The enzyme catalyses 2-(2-carboxy-4-methylthiazol-5-yl)ethyl phosphate + 4-amino-2-methyl-5-(diphosphooxymethyl)pyrimidine + 2 H(+) = thiamine phosphate + CO2 + diphosphate. The catalysed reaction is 4-methyl-5-(2-phosphooxyethyl)-thiazole + 4-amino-2-methyl-5-(diphosphooxymethyl)pyrimidine + H(+) = thiamine phosphate + diphosphate. It functions in the pathway cofactor biosynthesis; thiamine diphosphate biosynthesis; thiamine phosphate from 4-amino-2-methyl-5-diphosphomethylpyrimidine and 4-methyl-5-(2-phosphoethyl)-thiazole: step 1/1. Condenses 4-methyl-5-(beta-hydroxyethyl)thiazole monophosphate (THZ-P) and 2-methyl-4-amino-5-hydroxymethyl pyrimidine pyrophosphate (HMP-PP) to form thiamine monophosphate (TMP). The chain is Thiamine-phosphate synthase from Shouchella clausii (strain KSM-K16) (Alkalihalobacillus clausii).